Here is a 286-residue protein sequence, read N- to C-terminus: 33 kDa chaperonin (286 aa).

2 cysteine pairs are disulfide-bonded: cysteine 225–cysteine 227 and cysteine 258–cysteine 261.

It belongs to the HSP33 family. Under oxidizing conditions two disulfide bonds are formed involving the reactive cysteines. Under reducing conditions zinc is bound to the reactive cysteines and the protein is inactive.

It is found in the cytoplasm. Functionally, redox regulated molecular chaperone. Protects both thermally unfolding and oxidatively damaged proteins from irreversible aggregation. Plays an important role in the bacterial defense system toward oxidative stress. The sequence is that of 33 kDa chaperonin from Shewanella sediminis (strain HAW-EB3).